Consider the following 229-residue polypeptide: Endonuclease V (229 aa).

Residues Asp43 and Asp111 each coordinate Mg(2+).

The protein belongs to the endonuclease V family. It depends on Mg(2+) as a cofactor.

It is found in the cytoplasm. It catalyses the reaction Endonucleolytic cleavage at apurinic or apyrimidinic sites to products with a 5'-phosphate.. Its function is as follows. DNA repair enzyme involved in the repair of deaminated bases. Selectively cleaves double-stranded DNA at the second phosphodiester bond 3' to a deoxyinosine leaving behind the intact lesion on the nicked DNA. This is Endonuclease V from Rippkaea orientalis (strain PCC 8801 / RF-1) (Cyanothece sp. (strain PCC 8801)).